Consider the following 303-residue polypeptide: uncharacterized protein (303 aa).

The residue at position 63 (S63) is a Phosphoserine.

It belongs to the HAD-like hydrolase superfamily.

It is found in the cytoplasm. The protein localises to the nucleus. This is an uncharacterized protein from Schizosaccharomyces pombe (strain 972 / ATCC 24843) (Fission yeast).